The chain runs to 159 residues: Ribosomal RNA large subunit methyltransferase H (159 aa).

Residues Gly-108 and Phe-127–Phe-132 each bind S-adenosyl-L-methionine.

This sequence belongs to the RNA methyltransferase RlmH family. As to quaternary structure, homodimer.

The protein localises to the cytoplasm. The enzyme catalyses pseudouridine(1915) in 23S rRNA + S-adenosyl-L-methionine = N(3)-methylpseudouridine(1915) in 23S rRNA + S-adenosyl-L-homocysteine + H(+). Functionally, specifically methylates the pseudouridine at position 1915 (m3Psi1915) in 23S rRNA. In Magnetococcus marinus (strain ATCC BAA-1437 / JCM 17883 / MC-1), this protein is Ribosomal RNA large subunit methyltransferase H.